The following is a 473-amino-acid chain: MKTLYSLRRYFHVETLFNSTLVVGGRDQESTGFAWWAGNARLINLSGKLLGAHVAHAGLIVFWAGAMNLFEVAHFVPEKPMYEQGLILLPHLAALGYGVGPGGEVLDTFPYFVSGVLHLISSAVLGFGGVYHSLIGPETLEESYPFFGYLWKDKNKMTTILGIHLVLLGIGAWLLVWKAMYFGGVYDTWAPGGGDVRVISYPTYDPSVIFGYLLKSPFGGDGWIISVDNMEDVIGGHIWIGTTLIIGGFFHIFTKPFAWARRAFVWSGEAYLSYSLASVSLMAFIAAVFVWFNNTVYPSEFFGPTGPEASQAQAFTFLVRDQRLGANIASAQGPTGLGKYLMRSPTGEIIFGGETMRFWDMRAPWVEPLRGPNGLDLSKLKNDIQPWQERRSAEYMTHAPLGSLNSVGGVATEINSTNFVNPRSWLATSHYVLGFFFFVGHLWHAGRARAAAAGFEKGIDRDTEPVLSMRPLD.

A propeptide spanning residues Met-1–Glu-14 is cleaved from the precursor. An N-acetylthreonine modification is found at Thr-15. Position 15 is a phosphothreonine (Thr-15). 5 helical membrane passes run Leu-69 to Ala-93, Leu-134 to Asn-155, Lys-178 to Ser-200, Lys-255 to Ser-275, and Trp-291 to Ala-312. A [CaMn4O5] cluster-binding site is contributed by Glu-367. A helical membrane pass occupies residues Arg-447 to Pro-471.

It belongs to the PsbB/PsbC family. PsbC subfamily. In terms of assembly, PSII is composed of 1 copy each of membrane proteins PsbA, PsbB, PsbC, PsbD, PsbE, PsbF, PsbH, PsbI, PsbJ, PsbK, PsbL, PsbM, PsbT, PsbX, PsbY, PsbZ, Psb30/Ycf12, at least 3 peripheral proteins of the oxygen-evolving complex and a large number of cofactors. It forms dimeric complexes. Binds multiple chlorophylls and provides some of the ligands for the Ca-4Mn-5O cluster of the oxygen-evolving complex. It may also provide a ligand for a Cl- that is required for oxygen evolution. PSII binds additional chlorophylls, carotenoids and specific lipids. serves as cofactor.

It localises to the plastid. The protein localises to the chloroplast thylakoid membrane. Its function is as follows. One of the components of the core complex of photosystem II (PSII). It binds chlorophyll and helps catalyze the primary light-induced photochemical processes of PSII. PSII is a light-driven water:plastoquinone oxidoreductase, using light energy to abstract electrons from H(2)O, generating O(2) and a proton gradient subsequently used for ATP formation. This Ostreococcus tauri protein is Photosystem II CP43 reaction center protein.